A 1248-amino-acid polypeptide reads, in one-letter code: Reverse gyrase 1 (1248 aa).

The RG N-terminal-type zinc finger occupies 7–44 (IPPSIYLFSCPNCGRSISTYRLLLGSVCNICLEEDKEY). The Zn(2+) site is built by C16, C19, C34, and C37. ATP contacts are provided by residues Q92 and 109 to 116 (APPGLGKT). Positions 96-262 (IYRLLSGESF…KKYRENTQKN (167 aa)) constitute a Helicase ATP-binding domain. Residues 219-222 (DDVD) carry the DEAD box motif. The segment at 621 to 1248 (QKVKTVLLVV…QVYEEINEIR (628 aa)) is topoisomerase I. Residues 625–789 (TVLLVVESPN…NIRRAEFHEV (165 aa)) form the Toprim domain. Mg(2+) is bound at residue E631. The RG C-terminal-type; atypical zinc-finger motif lies at 706 to 735 (IKKCENNHQFTDFFESNKCPRCMTTKVRYD). 4 residues coordinate Zn(2+): C709, H713, C724, and C727. Mg(2+) is bound at residue D758. A Topo IA-type catalytic domain is found at 805–1248 (NVNLVKSQLV…QVYEEINEIR (444 aa)). The active-site O-(5'-phospho-DNA)-tyrosine intermediate is the Y965.

It in the N-terminal section; belongs to the DEAD box helicase family. DDVD subfamily. This sequence in the C-terminal section; belongs to the type IA topoisomerase family. In terms of assembly, monomer. Zn(2+) is required as a cofactor. It depends on Mg(2+) as a cofactor. In terms of processing, the N-terminus is blocked.

It localises to the cytoplasm. It catalyses the reaction ATP + H2O = ADP + phosphate + H(+). In terms of biological role, modifies the topological state of DNA by introducing positive supercoils in an ATP-dependent process. Increases the linking number in steps of +1. Has a DNA-stimulated ATPase activity; closed circular ssDNA stimulates ATPase much better than dsDNA although negative supercoiled, positive supercoiled and relaxed dsDNA all stimulate ATPase activity. All NTPs permit topoisomerization (relaxation) of negatively supercoiled dsDNA without nucleotide hydrolysis. It transiently cleaves a single DNA strand and remains covalently bound to the 5' DNA end. Acts via a tyrosine residue. Reverse gyrase binds and unwinds DNA independently of ATP binding and DNA cleavage. May be involved in rewinding the DNA strands in the regions of the chromosome that have opened up to allow transcription or replication, probably acts via ssDNA regions of the chromosome. The polypeptide is Reverse gyrase 1 (Sulfolobus acidocaldarius (strain ATCC 33909 / DSM 639 / JCM 8929 / NBRC 15157 / NCIMB 11770)).